The following is a 359-amino-acid chain: 3-isopropylmalate dehydrogenase (359 aa).

An NAD(+)-binding site is contributed by Gly76–Glu89. Residues Arg96, Arg106, Arg134, and Asp225 each coordinate substrate. 3 residues coordinate Mg(2+): Asp225, Asp249, and Asp253. Gly283–Asn295 serves as a coordination point for NAD(+).

This sequence belongs to the isocitrate and isopropylmalate dehydrogenases family. LeuB type 1 subfamily. In terms of assembly, homodimer. Requires Mg(2+) as cofactor. It depends on Mn(2+) as a cofactor.

The protein localises to the cytoplasm. The catalysed reaction is (2R,3S)-3-isopropylmalate + NAD(+) = 4-methyl-2-oxopentanoate + CO2 + NADH. It participates in amino-acid biosynthesis; L-leucine biosynthesis; L-leucine from 3-methyl-2-oxobutanoate: step 3/4. In terms of biological role, catalyzes the oxidation of 3-carboxy-2-hydroxy-4-methylpentanoate (3-isopropylmalate) to 3-carboxy-4-methyl-2-oxopentanoate. The product decarboxylates to 4-methyl-2 oxopentanoate. The sequence is that of 3-isopropylmalate dehydrogenase from Acinetobacter baylyi (strain ATCC 33305 / BD413 / ADP1).